The chain runs to 144 residues: Large ribosomal subunit protein uL15 (144 aa).

Residues Met1–Arg10 show a composition bias toward polar residues. The segment at Met1–Glu51 is disordered. The span at Gly11 to Gly20 shows a compositional bias: basic residues. The span at Arg21–Gly31 shows a compositional bias: gly residues. The span at Gly32 to Gly44 shows a compositional bias: basic residues.

The protein belongs to the universal ribosomal protein uL15 family. As to quaternary structure, part of the 50S ribosomal subunit.

In terms of biological role, binds to the 23S rRNA. The sequence is that of Large ribosomal subunit protein uL15 from Blochmanniella pennsylvanica (strain BPEN).